The chain runs to 328 residues: MSNHGLQMPEGVHVEEVSDSEGQFVMGPLERGYGVTIGNALRRVLLSSLRGLAITAVKIDGVQHEFSTIPGVTEDVADLILNLKEVRFKADEMQEGHLHLNLEGPGNWTAADIDEATAEYDVLNPDQHVATLAEDAVVNVDLRVGYGRGYVPSEENKREDDPIGVIAIDSIFTPIKNVNYEVKPTRVGQKIDYEELLLDVETDGSLTPEEAITQGASILRDHVSFFIQLEEEPEPVVEEQEVDEEVKRIRELLAQPVDELDLSVRSHNCLKAANIKTIGDLVRREEDEMLKFRNFGRKSLQELVEVLDERGLQFGMDVEEYLEEKKAS.

Positions 1–230 (MSNHGLQMPE…DHVSFFIQLE (230 aa)) are alpha N-terminal domain (alpha-NTD). The segment at 248–328 (RIRELLAQPV…EEYLEEKKAS (81 aa)) is alpha C-terminal domain (alpha-CTD).

This sequence belongs to the RNA polymerase alpha chain family. In terms of assembly, homodimer. The RNAP catalytic core consists of 2 alpha, 1 beta, 1 beta' and 1 omega subunit. When a sigma factor is associated with the core the holoenzyme is formed, which can initiate transcription.

The catalysed reaction is RNA(n) + a ribonucleoside 5'-triphosphate = RNA(n+1) + diphosphate. In terms of biological role, DNA-dependent RNA polymerase catalyzes the transcription of DNA into RNA using the four ribonucleoside triphosphates as substrates. The chain is DNA-directed RNA polymerase subunit alpha from Salinibacter ruber (strain DSM 13855 / M31).